A 305-amino-acid polypeptide reads, in one-letter code: Aspartate carbamoyltransferase catalytic subunit (305 aa).

2 residues coordinate carbamoyl phosphate: Arg-53 and Thr-54. Lys-82 contacts L-aspartate. Arg-103, His-131, and Gln-134 together coordinate carbamoyl phosphate. Arg-164 and Arg-226 together coordinate L-aspartate. Carbamoyl phosphate is bound by residues Leu-265 and Pro-266.

It belongs to the aspartate/ornithine carbamoyltransferase superfamily. ATCase family. As to quaternary structure, heterooligomer of catalytic and regulatory chains.

The enzyme catalyses carbamoyl phosphate + L-aspartate = N-carbamoyl-L-aspartate + phosphate + H(+). It functions in the pathway pyrimidine metabolism; UMP biosynthesis via de novo pathway; (S)-dihydroorotate from bicarbonate: step 2/3. Its function is as follows. Catalyzes the condensation of carbamoyl phosphate and aspartate to form carbamoyl aspartate and inorganic phosphate, the committed step in the de novo pyrimidine nucleotide biosynthesis pathway. The polypeptide is Aspartate carbamoyltransferase catalytic subunit (Ignicoccus hospitalis (strain KIN4/I / DSM 18386 / JCM 14125)).